The sequence spans 808 residues: Protein SQS1 (808 aa).

Composition is skewed to basic residues over residues 1-20 and 28-37; these read MAKR…KRGG and RGSKRGRGGR. Disordered stretches follow at residues 1-67, 151-180, and 485-529; these read MAKR…GDLS, RSKN…DMEI, and ETPP…EELG. Composition is skewed to basic and acidic residues over residues 39–48 and 153–179; these read RGFEETERSA and KNQE…KDME. Residues 621–683 enclose the R3H domain; sequence GFHVQNIRDE…HTHIMVEKVK (63 aa). The 48-residue stretch at 748 to 795 folds into the G-patch domain; sequence QDNIGRRMLEKLGWSSGEGLGAHGNKGISIPVMARVKKSKSGLRHSKE. The segment at 764–808 is disordered; that stretch reads GEGLGAHGNKGISIPVMARVKKSKSGLRHSKEDEDTGRSSSFRKK. Positions 782 to 791 are enriched in basic residues; it reads RVKKSKSGLR.

It belongs to the SQS1 family.

It localises to the cytoplasm. The protein localises to the nucleus. May be involved in splicing. This is Protein SQS1 (SQS1) from Candida glabrata (strain ATCC 2001 / BCRC 20586 / JCM 3761 / NBRC 0622 / NRRL Y-65 / CBS 138) (Yeast).